The sequence spans 332 residues: Adenosine receptor A2b (332 aa).

Residues 1-8 (MPLEAQDA) lie on the Extracellular side of the membrane. Residues 9 to 33 (VYVALELALAALSVTGNVLVCAAVG) form a helical membrane-spanning segment. The Cytoplasmic portion of the chain corresponds to 34–43 (TSSALQTPTN). The chain crosses the membrane as a helical span at residues 44 to 67 (YFLVSLAAADVAVGLFAIPFAVTI). Over 68-78 (SLGFCTDFHSC) the chain is Extracellular. Cysteines 78 and 170 form a disulfide. A helical membrane pass occupies residues 79–101 (LFLACFVLVLTQSSIFSLLAVAV). Residues 102 to 121 (DRYLAVRVPLRYKSLVTGAR) are Cytoplasmic-facing. A helical transmembrane segment spans residues 122–144 (ARGVIAALWVLAFGIGLTPFLGW). The Extracellular segment spans residues 145–177 (NDRKIATNCTEPGDAATNVSCCLIRCLFENVVP). 2 N-linked (GlcNAc...) asparagine glycosylation sites follow: Asn-152 and Asn-162. Glu-173 lines the adenosine pocket. A helical transmembrane segment spans residues 178 to 202 (MSYMVYFNFFGCVLPPLLIMLVIYV). The Cytoplasmic segment spans residues 203–234 (KIFLVACRQLQRTELMDHSRTVLQREIHAAKS). Residues 235 to 258 (LALIVGIFALCWLPVHTINCASLF) form a helical membrane-spanning segment. Asn-253 is an adenosine binding site. Residues 259–266 (QPTWAKVK) are Extracellular-facing. Residues 267–290 (PKWAINTAILLSHANSAVNPIVYA) traverse the membrane as a helical segment. 2 residues coordinate adenosine: Ser-278 and His-279. Residues 291-332 (YRNRDFRYTFHKIISRYILCRTHILKSGEGQVGSQPTLQLGL) lie on the Cytoplasmic side of the membrane. A lipid anchor (S-palmitoyl cysteine) is attached at Cys-310.

Belongs to the G-protein coupled receptor 1 family.

The protein localises to the cell membrane. In terms of biological role, receptor for adenosine. The activity of this receptor is mediated by G proteins which activate adenylyl cyclase. This Bos taurus (Bovine) protein is Adenosine receptor A2b (ADORA2B).